Consider the following 345-residue polypeptide: MTGQLRLDDHLQRYSETAPHALAVATAVDAIAAAAIEIADLIGAGDLADASGLTTGRNSDGDVQRDLDVQADAILRRCLGKLSIAALASEEMREPQIGDRAARICVAIDPLDGSSNIDINMTVGTIFSILPAPDDLALAFHQRGSAQFAAGFVTYGPQTSLVLTLGDGVDIFTLDRKAGCFRLARSAIQISEAGEEFAINASNRRHWDPPVRAFIDECLAGVEGPANHDFNMRWVGSLVAEAYRILTRGGVFLYPSDARPGYGDGRLRLTYEAHPMAYIIEQAGGSASTGRERILDLSAQSLHQRVPLIMGSSNEVRRVEELHCDPLLVASISAPLFARRGFFRL.

Mg(2+) contacts are provided by glutamate 90, aspartate 109, leucine 111, and aspartate 112. Substrate contacts are provided by residues 112-115 (DGSS) and asparagine 200. Glutamate 272 contributes to the Mg(2+) binding site.

This sequence belongs to the FBPase class 1 family. In terms of assembly, homotetramer. The cofactor is Mg(2+).

The protein localises to the cytoplasm. It catalyses the reaction beta-D-fructose 1,6-bisphosphate + H2O = beta-D-fructose 6-phosphate + phosphate. It functions in the pathway carbohydrate biosynthesis; gluconeogenesis. This chain is Fructose-1,6-bisphosphatase class 1, found in Bradyrhizobium diazoefficiens (strain JCM 10833 / BCRC 13528 / IAM 13628 / NBRC 14792 / USDA 110).